Here is a 96-residue protein sequence, read N- to C-terminus: Phosphoribosyl-ATP pyrophosphatase (96 aa).

It belongs to the PRA-PH family.

The protein resides in the cytoplasm. It carries out the reaction 1-(5-phospho-beta-D-ribosyl)-ATP + H2O = 1-(5-phospho-beta-D-ribosyl)-5'-AMP + diphosphate + H(+). The protein operates within amino-acid biosynthesis; L-histidine biosynthesis; L-histidine from 5-phospho-alpha-D-ribose 1-diphosphate: step 2/9. This chain is Phosphoribosyl-ATP pyrophosphatase, found in Methanobrevibacter smithii (strain ATCC 35061 / DSM 861 / OCM 144 / PS).